We begin with the raw amino-acid sequence, 494 residues long: Ell-associated factor Eaf (494 aa).

A compositionally biased stretch (polar residues) spans 119-138; that stretch reads KTRSEVTNKPSLMSATNAPM. Disordered stretches follow at residues 119–212 and 243–494; these read KTRS…PAWH and QANI…DDDD. Positions 139-156 are enriched in low complexity; that stretch reads SNGAPVPSSAAAGTGSAG. Positions 159–178 are enriched in polar residues; that stretch reads ENSTMRISSKTKVSTGSRRN. The residue at position 188 (Ser-188) is a Phosphoserine. 2 stretches are compositionally biased toward polar residues: residues 243–256 and 280–306; these read QANISGSSTGSSAG and QQLTQRSSPPMQQQQHQNYGRGSNNYA. Residues 307–319 show a composition bias toward low complexity; the sequence is QQQQQQQQQQLQQ. Positions 320-332 are enriched in polar residues; the sequence is RASFSHSNHSNSM. Positions 344–373 are enriched in low complexity; that stretch reads QTAQSMAQAAAALEQQIGGELSASSSSSES. Residues 374-389 show a composition bias toward acidic residues; sequence DSSDSDSGSDSDDSTE. The span at 414-424 shows a compositional bias: low complexity; that stretch reads HQQQQHMHQLP. Positions 437-454 are enriched in basic residues; that stretch reads SHHHHQQQQQSHHHHHHQ. Composition is skewed to low complexity over residues 455–464 and 475–488; these read QQQQQQHQQS and NDLLQNDLQLSSNS.

The protein belongs to the EAF family.

The protein localises to the nucleus. Promotes transcriptional elongation by Su(Tpl)/ELL. Essential for development. In Drosophila virilis (Fruit fly), this protein is Ell-associated factor Eaf.